The following is a 600-amino-acid chain: MKISNSERRLRQPIVVVLGHVDHGKTTLLDKIRGTTVVKKEPGEMTQEVGASFVPSYIIEKLAEPLKKVIPIKLQIPGLLFIDTPGHEYFSNLRRRGGSVADIAILVVDITEGLQKQSIESIQILRERKVPFLIAANKIDKIPGWKSNNDIPFLASIEKQRNDVKVYLDNLVYNLVSQLANLGFSSERYDRIKDFTKTVAIVPVSAKTGEGVADLLALLAGLTQRYLETRLKFAEGPAKGVILEVKEDPGLGHTIDVIIYDGVLKKNDTIILGGINGIIITKVRGIFVPRPLQDMKLSKYDLTPIDEVYAAAGVKISAPNLEEALAGSPIYVVEDESKVERYKQQIEEEIKEVRLYSDIDGIILKADSLGTLEALVSALQREGIPIRLADIGPISKRDVIEASIVAQRSKEYGIIAAFRVKLLQGIDTSGIKILYNEIIYQLIEDIKKHINDVREAEKRRTFDTLILPGKIKILPGYVFRRSDPVVVGIEVIGGIIRPKYPLIKEDGRRVGEVLQIQDNKKSLERATKGMEVAISIKGNIMIGRHVNEGDVLYTDVPKEDLEILVNKYPSSITDDMREVIKEIIRIKRKEDPLYGLGLQI.

Residues 10-227 form the tr-type G domain; it reads LRQPIVVVLG…LLAGLTQRYL (218 aa). Residues 19 to 26 form a G1 region; that stretch reads GHVDHGKT. 19–26 lines the GTP pocket; that stretch reads GHVDHGKT. Residues 44–48 are G2; that stretch reads EMTQE. Residues 83 to 86 form a G3 region; that stretch reads DTPG. GTP contacts are provided by residues 83 to 87 and 137 to 140; these read DTPGH and NKID. The segment at 137 to 140 is G4; the sequence is NKID. The interval 205–207 is G5; sequence SAK.

It belongs to the TRAFAC class translation factor GTPase superfamily. Classic translation factor GTPase family. IF-2 subfamily.

In terms of biological role, function in general translation initiation by promoting the binding of the formylmethionine-tRNA to ribosomes. Seems to function along with eIF-2. The sequence is that of Probable translation initiation factor IF-2 from Saccharolobus solfataricus (strain ATCC 35092 / DSM 1617 / JCM 11322 / P2) (Sulfolobus solfataricus).